A 320-amino-acid chain; its full sequence is Malate dehydrogenase (320 aa).

NAD(+) is bound by residues 8–13 (GAGQIG) and Asp33. Positions 82 and 88 each coordinate substrate. NAD(+)-binding positions include Asn95 and 118 to 120 (ITN). Positions 120 and 151 each coordinate substrate. His175 (proton acceptor) is an active-site residue.

This sequence belongs to the LDH/MDH superfamily. MDH type 3 family.

It catalyses the reaction (S)-malate + NAD(+) = oxaloacetate + NADH + H(+). In terms of biological role, catalyzes the reversible oxidation of malate to oxaloacetate. This Pelagibacter ubique (strain HTCC1062) protein is Malate dehydrogenase.